Consider the following 544-residue polypeptide: Dihydrolipoyllysine-residue acetyltransferase component of pyruvate dehydrogenase complex (544 aa).

Lipoyl-binding domains are found at residues 1–76 (MYEF…VTID) and 113–188 (IYDF…VLIG). Lys-42 and Lys-154 each carry N6-lipoyllysine. In terms of domain architecture, Peripheral subunit-binding (PSBD) spans 242–279 (LASPVARKLASDLGVDIATIKGSGEQGRVMKDDVQNSK). His-516 is an active-site residue.

It belongs to the 2-oxoacid dehydrogenase family. Forms a 24-polypeptide structural core with octahedral symmetry. (R)-lipoate serves as cofactor.

It carries out the reaction N(6)-[(R)-dihydrolipoyl]-L-lysyl-[protein] + acetyl-CoA = N(6)-[(R)-S(8)-acetyldihydrolipoyl]-L-lysyl-[protein] + CoA. Its function is as follows. The pyruvate dehydrogenase complex catalyzes the overall conversion of pyruvate to acetyl-CoA and CO(2). It contains multiple copies of three enzymatic components: pyruvate dehydrogenase (E1), dihydrolipoamide acetyltransferase (E2) and lipoamide dehydrogenase (E3). This is Dihydrolipoyllysine-residue acetyltransferase component of pyruvate dehydrogenase complex (pdhC) from Acholeplasma laidlawii.